The following is a 202-amino-acid chain: Guanylate kinase (202 aa).

The 179-residue stretch at 3 to 181 (GNLFVVAAPS…ALDDLRAVVR (179 aa)) folds into the Guanylate kinase-like domain. 10–17 (APSGAGKT) lines the ATP pocket.

This sequence belongs to the guanylate kinase family.

Its subcellular location is the cytoplasm. It catalyses the reaction GMP + ATP = GDP + ADP. Its function is as follows. Essential for recycling GMP and indirectly, cGMP. In Dechloromonas aromatica (strain RCB), this protein is Guanylate kinase.